Reading from the N-terminus, the 84-residue chain is Exodeoxyribonuclease 7 small subunit (84 aa).

Belongs to the XseB family. Heterooligomer composed of large and small subunits.

It is found in the cytoplasm. It carries out the reaction Exonucleolytic cleavage in either 5'- to 3'- or 3'- to 5'-direction to yield nucleoside 5'-phosphates.. Functionally, bidirectionally degrades single-stranded DNA into large acid-insoluble oligonucleotides, which are then degraded further into small acid-soluble oligonucleotides. The chain is Exodeoxyribonuclease 7 small subunit from Bacillus velezensis (strain DSM 23117 / BGSC 10A6 / LMG 26770 / FZB42) (Bacillus amyloliquefaciens subsp. plantarum).